The following is a 537-amino-acid chain: CTP synthase (537 aa).

Residues 1 to 265 are amidoligase domain; the sequence is MTKYIFVTGG…GKYLTKRLKL (265 aa). Ser13 lines the CTP pocket. Ser13 contacts UTP. 14 to 19 contacts ATP; that stretch reads GLGKGI. Tyr54 is an L-glutamine binding site. An ATP-binding site is contributed by Asp71. Residues Asp71 and Glu139 each coordinate Mg(2+). CTP-binding positions include 146–148, 186–191, and Lys222; these read DIE and KTKPTQ. Residues 186–191 and Lys222 contribute to the UTP site; that span reads KTKPTQ. The region spanning 290-532 is the Glutamine amidotransferase type-1 domain; the sequence is EIAIVGKYVK…VRAAKEYKQE (243 aa). Gly351 lines the L-glutamine pocket. The active-site Nucleophile; for glutamine hydrolysis is the Cys378. Residues 379–382, Glu402, and Arg459 each bind L-glutamine; that span reads FGFQ. Residues His505 and Glu507 contribute to the active site.

Belongs to the CTP synthase family. As to quaternary structure, homotetramer.

It carries out the reaction UTP + L-glutamine + ATP + H2O = CTP + L-glutamate + ADP + phosphate + 2 H(+). The catalysed reaction is L-glutamine + H2O = L-glutamate + NH4(+). The enzyme catalyses UTP + NH4(+) + ATP = CTP + ADP + phosphate + 2 H(+). The protein operates within pyrimidine metabolism; CTP biosynthesis via de novo pathway; CTP from UDP: step 2/2. Allosterically activated by GTP, when glutamine is the substrate; GTP has no effect on the reaction when ammonia is the substrate. The allosteric effector GTP functions by stabilizing the protein conformation that binds the tetrahedral intermediate(s) formed during glutamine hydrolysis. Inhibited by the product CTP, via allosteric rather than competitive inhibition. Functionally, catalyzes the ATP-dependent amination of UTP to CTP with either L-glutamine or ammonia as the source of nitrogen. Regulates intracellular CTP levels through interactions with the four ribonucleotide triphosphates. The chain is CTP synthase from Pyrococcus furiosus (strain ATCC 43587 / DSM 3638 / JCM 8422 / Vc1).